Reading from the N-terminus, the 323-residue chain is tRNA dimethylallyltransferase (323 aa).

Residue 12–19 (GPTAAGKT) participates in ATP binding. Residue 14–19 (TAAGKT) participates in substrate binding. 2 interaction with substrate tRNA regions span residues 37–40 (DSAL) and 161–165 (QRLMR).

This sequence belongs to the IPP transferase family. As to quaternary structure, monomer. Requires Mg(2+) as cofactor.

The enzyme catalyses adenosine(37) in tRNA + dimethylallyl diphosphate = N(6)-dimethylallyladenosine(37) in tRNA + diphosphate. In terms of biological role, catalyzes the transfer of a dimethylallyl group onto the adenine at position 37 in tRNAs that read codons beginning with uridine, leading to the formation of N6-(dimethylallyl)adenosine (i(6)A). The protein is tRNA dimethylallyltransferase of Pseudomonas paraeruginosa (strain DSM 24068 / PA7) (Pseudomonas aeruginosa (strain PA7)).